A 665-amino-acid polypeptide reads, in one-letter code: Protein-arginine deiminase type-2 (665 aa).

The Ca(2+) site is built by D123, D125, D127, E131, N154, D156, D158, D166, D169, K171, D177, D180, E354, D389, F408, L411, and E412. C647 acts as the Nucleophile in catalysis.

This sequence belongs to the protein arginine deiminase family. In terms of assembly, homodimer. Requires Ca(2+) as cofactor. In terms of tissue distribution, spinal cord, submaxillary gland, cerebrum, cerebellum, and skeletal muscle.

It is found in the cytoplasm. It catalyses the reaction L-arginyl-[protein] + H2O = L-citrullyl-[protein] + NH4(+). Catalyzes the deimination of arginine residues of proteins. The chain is Protein-arginine deiminase type-2 (Padi2) from Rattus norvegicus (Rat).